Consider the following 429-residue polypeptide: Adenylosuccinate synthetase (429 aa).

Residues 13–19 (GDEGKGK) and 41–43 (GHT) contribute to the GTP site. Residue Asp-14 is the Proton acceptor of the active site. The Mg(2+) site is built by Asp-14 and Gly-41. IMP contacts are provided by residues 14-17 (DEGK), 39-42 (NAGH), Thr-130, Arg-144, Gln-225, Thr-240, and Arg-304. Residue His-42 is the Proton donor of the active site. 300–306 (ATTGRAR) lines the substrate pocket. GTP is bound by residues Arg-306, 332 to 334 (KLD), and 414 to 416 (STG).

The protein belongs to the adenylosuccinate synthetase family. In terms of assembly, homodimer. It depends on Mg(2+) as a cofactor.

It is found in the cytoplasm. It carries out the reaction IMP + L-aspartate + GTP = N(6)-(1,2-dicarboxyethyl)-AMP + GDP + phosphate + 2 H(+). Its pathway is purine metabolism; AMP biosynthesis via de novo pathway; AMP from IMP: step 1/2. In terms of biological role, plays an important role in the de novo pathway of purine nucleotide biosynthesis. Catalyzes the first committed step in the biosynthesis of AMP from IMP. In Acidithiobacillus ferrooxidans (Thiobacillus ferrooxidans), this protein is Adenylosuccinate synthetase.